The following is a 139-amino-acid chain: Holo-[acyl-carrier-protein] synthase (139 aa).

2 residues coordinate Mg(2+): D9 and E63.

The protein belongs to the P-Pant transferase superfamily. AcpS family. The cofactor is Mg(2+).

The protein localises to the cytoplasm. The catalysed reaction is apo-[ACP] + CoA = holo-[ACP] + adenosine 3',5'-bisphosphate + H(+). Transfers the 4'-phosphopantetheine moiety from coenzyme A to a Ser of acyl-carrier-protein. This Wigglesworthia glossinidia brevipalpis protein is Holo-[acyl-carrier-protein] synthase.